Reading from the N-terminus, the 993-residue chain is Nisin biosynthesis protein NisB (993 aa).

The chain crosses the membrane as a helical span at residues 838-851 (AIFCADSKIIPNLL).

The protein to B.subtilis SpaB and S.epidermidis EpiB.

It is found in the cell membrane. Functionally, involved in the post-translational modification of the lantibiotic nisin. This is Nisin biosynthesis protein NisB (nisB) from Lactococcus lactis subsp. lactis (Streptococcus lactis).